The following is a 179-amino-acid chain: Replication restart protein DnaT (179 aa).

The segment at Gly-156 to Gly-179 is disordered.

It belongs to the DnaT family. As to quaternary structure, homooligomerizes. Interacts with PriB. Component of the replication restart primosome. Primosome assembly occurs via a 'hand-off' mechanism. PriA binds to replication forks, subsequently PriB then DnaT bind; DnaT then displaces ssDNA to generate the helicase loading substrate.

Involved in the restart of stalled replication forks, which reloads the replicative helicase on sites other than the origin of replication. Can function in multiple replication restart pathways. Displaces ssDNA from a PriB-ssDNA complex. Probably forms a spiral filament on ssDNA. The sequence is that of Replication restart protein DnaT from Escherichia coli O1:K1 / APEC.